Consider the following 274-residue polypeptide: Dermonecrotic toxin SdSicTox-betaIIB1bix (274 aa).

His5 is an active-site residue. Positions 25 and 27 each coordinate Mg(2+). The active-site Nucleophile is His41. 2 disulfide bridges follow: Cys45-Cys51 and Cys47-Cys190. A Mg(2+)-binding site is contributed by Asp85.

It belongs to the arthropod phospholipase D family. Class II subfamily. Mg(2+) serves as cofactor. As to expression, expressed by the venom gland.

The protein resides in the secreted. It catalyses the reaction an N-(acyl)-sphingosylphosphocholine = an N-(acyl)-sphingosyl-1,3-cyclic phosphate + choline. The enzyme catalyses an N-(acyl)-sphingosylphosphoethanolamine = an N-(acyl)-sphingosyl-1,3-cyclic phosphate + ethanolamine. The catalysed reaction is a 1-acyl-sn-glycero-3-phosphocholine = a 1-acyl-sn-glycero-2,3-cyclic phosphate + choline. It carries out the reaction a 1-acyl-sn-glycero-3-phosphoethanolamine = a 1-acyl-sn-glycero-2,3-cyclic phosphate + ethanolamine. In terms of biological role, dermonecrotic toxins cleave the phosphodiester linkage between the phosphate and headgroup of certain phospholipids (sphingolipid and lysolipid substrates), forming an alcohol (often choline) and a cyclic phosphate. This toxin acts on sphingomyelin (SM). It may also act on ceramide phosphoethanolamine (CPE), lysophosphatidylcholine (LPC) and lysophosphatidylethanolamine (LPE), but not on lysophosphatidylserine (LPS), and lysophosphatidylglycerol (LPG). It acts by transphosphatidylation, releasing exclusively cyclic phosphate products as second products. Induces dermonecrosis, hemolysis, increased vascular permeability, edema, inflammatory response, and platelet aggregation. In Sicarius cf. damarensis (strain GJB-2008) (Six-eyed sand spider), this protein is Dermonecrotic toxin SdSicTox-betaIIB1bix.